Here is a 340-residue protein sequence, read N- to C-terminus: Proline-rich transmembrane protein 2 (340 aa).

Residues 1–261 are disordered; sequence MAASSSEISE…AGPGVEGGEG (261 aa). The Cytoplasmic portion of the chain corresponds to 1–268; the sequence is MAASSSEISE…GEGTQKPRDY (268 aa). At Ser-28 the chain carries Phosphoserine. Thr-74 bears the Phosphothreonine mark. Pro residues-rich tracts occupy residues 131 to 155 and 197 to 207; these read PPEP…PKPA and APEPHSPPSKK. At Ser-238 the chain carries Phosphoserine. At Arg-240 the chain carries Omega-N-methylarginine. 2 positions are modified to phosphoserine: Ser-248 and Ser-249. The segment at residues 269-289 is an intramembrane region (helical); sequence IILAILSCFCPMWPVNIVAFA. The Cytoplasmic segment spans residues 290 to 317; it reads YAVMSRNSLQQGDVDGAQRLGRVAKLLS. A helical membrane pass occupies residues 318–338; the sequence is IVALVGGVLIIIASCVINLGV. Topologically, residues 339–340 are extracellular; that stretch reads YK.

This sequence belongs to the CD225/Dispanin family. Component of the outer core of AMPAR complex. AMPAR complex consists of an inner core made of 4 pore-forming GluA/GRIA proteins (GRIA1, GRIA2, GRIA3 and GRIA4) and 4 major auxiliary subunits arranged in a twofold symmetry. One of the two pairs of distinct binding sites is occupied either by CNIH2, CNIH3 or CACNG2, CACNG3. The other harbors CACNG2, CACNG3, CACNG4, CACNG8 or GSG1L. This inner core of AMPAR complex is complemented by outer core constituents binding directly to the GluA/GRIA proteins at sites distinct from the interaction sites of the inner core constituents. Outer core constituents include at least PRRT1, PRRT2, CKAMP44/SHISA9, FRRS1L and NRN1. The proteins of the inner and outer core serve as a platform for other, more peripherally associated AMPAR constituents. Alone or in combination, these auxiliary subunits control the gating and pharmacology of the AMPAR complex and profoundly impact their biogenesis and protein processing. Interacts with intersectin 1/ITSN1. Interacts with SNARE complex components, including SNAP25, STX1A, SYT1 and SYT2; this interaction may inhibit SNARE complex formation.

It is found in the cell membrane. The protein resides in the presynaptic cell membrane. The protein localises to the synapse. It localises to the cell projection. Its subcellular location is the axon. It is found in the cytoplasmic vesicle. The protein resides in the secretory vesicle. The protein localises to the synaptic vesicle membrane. It localises to the postsynaptic density membrane. Its subcellular location is the dendritic spine. Its function is as follows. As a component of the outer core of AMPAR complex, may be involved in synaptic transmission in the central nervous system. In hippocampal neurons, in presynaptic terminals, plays an important role in the final steps of neurotransmitter release, possibly by regulating Ca(2+)-sensing. In the cerebellum, may inhibit SNARE complex formation and down-regulate short-term facilitation. The polypeptide is Proline-rich transmembrane protein 2 (PRRT2) (Pongo abelii (Sumatran orangutan)).